A 556-amino-acid chain; its full sequence is Arginine--tRNA ligase (556 aa).

Residues 132 to 142 (ANPTGDLHLGH) carry the 'HIGH' region motif.

It belongs to the class-I aminoacyl-tRNA synthetase family. In terms of assembly, monomer.

It localises to the cytoplasm. It catalyses the reaction tRNA(Arg) + L-arginine + ATP = L-arginyl-tRNA(Arg) + AMP + diphosphate. The sequence is that of Arginine--tRNA ligase from Bacillus velezensis (strain DSM 23117 / BGSC 10A6 / LMG 26770 / FZB42) (Bacillus amyloliquefaciens subsp. plantarum).